Here is a 327-residue protein sequence, read N- to C-terminus: Ribosomal RNA small subunit methyltransferase H (327 aa).

S-adenosyl-L-methionine is bound by residues Gly42–His44, Asp61, Leu95, Asp109, and Gln116.

The protein belongs to the methyltransferase superfamily. RsmH family.

The protein localises to the cytoplasm. The enzyme catalyses cytidine(1402) in 16S rRNA + S-adenosyl-L-methionine = N(4)-methylcytidine(1402) in 16S rRNA + S-adenosyl-L-homocysteine + H(+). Its function is as follows. Specifically methylates the N4 position of cytidine in position 1402 (C1402) of 16S rRNA. The polypeptide is Ribosomal RNA small subunit methyltransferase H (Desulfovibrio desulfuricans (strain ATCC 27774 / DSM 6949 / MB)).